The sequence spans 160 residues: Large ribosomal subunit protein uL22c (160 aa).

This sequence belongs to the universal ribosomal protein uL22 family. In terms of assembly, part of the 50S ribosomal subunit.

Its subcellular location is the plastid. The protein localises to the chloroplast. This protein binds specifically to 23S rRNA. Functionally, the globular domain of the protein is located near the polypeptide exit tunnel on the outside of the subunit, while an extended beta-hairpin is found that lines the wall of the exit tunnel in the center of the 70S ribosome. This chain is Large ribosomal subunit protein uL22c (rpl22), found in Draba nemorosa (Woodland whitlowgrass).